We begin with the raw amino-acid sequence, 391 residues long: Carbamoyl phosphate synthase small chain (391 aa).

The tract at residues 1-187 is CPSase; it reads MAGVKERAVL…PLPYAWPTLK (187 aa). The L-glutamine site is built by serine 50, glycine 239, and glycine 241. Residues 191–376 form the Glutamine amidotransferase type-1 domain; that stretch reads RIVVMDFGIK…LEEVEAFHGA (186 aa). The active-site Nucleophile is the cysteine 266. Positions 267, 270, 308, 310, and 311 each coordinate L-glutamine. Active-site residues include histidine 349 and glutamate 351.

The protein belongs to the CarA family. As to quaternary structure, composed of two chains; the small (or glutamine) chain promotes the hydrolysis of glutamine to ammonia, which is used by the large (or ammonia) chain to synthesize carbamoyl phosphate. Tetramer of heterodimers (alpha,beta)4.

The enzyme catalyses hydrogencarbonate + L-glutamine + 2 ATP + H2O = carbamoyl phosphate + L-glutamate + 2 ADP + phosphate + 2 H(+). It carries out the reaction L-glutamine + H2O = L-glutamate + NH4(+). It functions in the pathway amino-acid biosynthesis; L-arginine biosynthesis; carbamoyl phosphate from bicarbonate: step 1/1. It participates in pyrimidine metabolism; UMP biosynthesis via de novo pathway; (S)-dihydroorotate from bicarbonate: step 1/3. Small subunit of the glutamine-dependent carbamoyl phosphate synthetase (CPSase). CPSase catalyzes the formation of carbamoyl phosphate from the ammonia moiety of glutamine, carbonate, and phosphate donated by ATP, constituting the first step of 2 biosynthetic pathways, one leading to arginine and/or urea and the other to pyrimidine nucleotides. The small subunit (glutamine amidotransferase) binds and cleaves glutamine to supply the large subunit with the substrate ammonia. This Thermus thermophilus (strain ATCC BAA-163 / DSM 7039 / HB27) protein is Carbamoyl phosphate synthase small chain.